Reading from the N-terminus, the 461-residue chain is Asparagine--tRNA ligase (461 aa).

It belongs to the class-II aminoacyl-tRNA synthetase family. As to quaternary structure, homodimer.

It localises to the cytoplasm. It catalyses the reaction tRNA(Asn) + L-asparagine + ATP = L-asparaginyl-tRNA(Asn) + AMP + diphosphate + H(+). This chain is Asparagine--tRNA ligase, found in Solibacter usitatus (strain Ellin6076).